Here is a 334-residue protein sequence, read N- to C-terminus: Aspartate carbamoyltransferase catalytic subunit (334 aa).

Arg71 and Thr72 together coordinate carbamoyl phosphate. Lys99 provides a ligand contact to L-aspartate. Carbamoyl phosphate-binding residues include Arg121, His151, and Gln154. Residues Arg184 and Arg239 each coordinate L-aspartate. The carbamoyl phosphate site is built by Gly280 and Pro281.

Belongs to the aspartate/ornithine carbamoyltransferase superfamily. ATCase family. As to quaternary structure, heterododecamer (2C3:3R2) of six catalytic PyrB chains organized as two trimers (C3), and six regulatory PyrI chains organized as three dimers (R2).

The enzyme catalyses carbamoyl phosphate + L-aspartate = N-carbamoyl-L-aspartate + phosphate + H(+). Its pathway is pyrimidine metabolism; UMP biosynthesis via de novo pathway; (S)-dihydroorotate from bicarbonate: step 2/3. Catalyzes the condensation of carbamoyl phosphate and aspartate to form carbamoyl aspartate and inorganic phosphate, the committed step in the de novo pyrimidine nucleotide biosynthesis pathway. In Pseudomonas fluorescens (strain SBW25), this protein is Aspartate carbamoyltransferase catalytic subunit.